A 963-amino-acid chain; its full sequence is Bifunctional glutamine synthetase adenylyltransferase/adenylyl-removing enzyme (963 aa).

Residues 1–451 are adenylyl removase; it reads MAAPSELQLY…EHFADIIAER (451 aa). The adenylyl transferase stretch occupies residues 461-963; that stretch reads TIEWKALWAG…VAFWEKVFAE (503 aa).

The protein belongs to the GlnE family. Requires Mg(2+) as cofactor.

The catalysed reaction is [glutamine synthetase]-O(4)-(5'-adenylyl)-L-tyrosine + phosphate = [glutamine synthetase]-L-tyrosine + ADP. It catalyses the reaction [glutamine synthetase]-L-tyrosine + ATP = [glutamine synthetase]-O(4)-(5'-adenylyl)-L-tyrosine + diphosphate. Functionally, involved in the regulation of glutamine synthetase GlnA, a key enzyme in the process to assimilate ammonia. When cellular nitrogen levels are high, the C-terminal adenylyl transferase (AT) inactivates GlnA by covalent transfer of an adenylyl group from ATP to specific tyrosine residue of GlnA, thus reducing its activity. Conversely, when nitrogen levels are low, the N-terminal adenylyl removase (AR) activates GlnA by removing the adenylyl group by phosphorolysis, increasing its activity. The regulatory region of GlnE binds the signal transduction protein PII (GlnB) which indicates the nitrogen status of the cell. The polypeptide is Bifunctional glutamine synthetase adenylyltransferase/adenylyl-removing enzyme (Hahella chejuensis (strain KCTC 2396)).